The sequence spans 491 residues: 3-phosphoinositide-dependent protein kinase 1 (491 aa).

One can recognise a Protein kinase domain in the interval 44-311; the sequence is FEFGKIYGVG…YVALKRHPFF (268 aa). Residues 54 to 56 and lysine 73 each bind ATP; that span reads SYS. The interval 75–119 is PIF-pocket; that stretch reads MDKKFITKENKTAYVKLERIVLDQLEHPGIIKLYFTFQDTSSLYM. Residues 77–112 form a PIF-binding region; it reads KKFITKENKTAYVKLERIVLDQLEHPGIIKLYFTFQ. Residues 122 to 124 and glutamate 128 contribute to the ATP site; that span reads ESC. Aspartate 167 acts as the Proton acceptor in catalysis. ATP is bound at residue glutamate 171. The residue at position 177 (serine 177) is a Phosphoserine. Aspartate 185 is an ATP binding site. The interval 185–222 is activation loop; that stretch reads DFGSVKPMQDSQITVLPNAASDDKACTFVGTAAYVPPE. Position 211 is a phosphothreonine; by autocatalysis (threonine 211). A phosphoserine mark is found at serine 276 and serine 337. The interval 321–377 is disordered; it reads SQTPPKLAPDPASQTASPERDDTHGSPWNLTHIGDSLATQNEGHSAPPTSSESSGSI. Residues 365–376 are compositionally biased toward low complexity; that stretch reads SAPPTSSESSGS. Residue serine 382 is modified to Phosphoserine. Residues 386–491 form the PH domain; the sequence is FDSRWQQFLE…KKAIETLQNR (106 aa).

It belongs to the protein kinase superfamily. AGC Ser/Thr protein kinase family. PDPK1 subfamily. Interacts with AGC1-5 and AGC1-7. Interacts with the C-terminal PIF domain of the protein kinases D6PK/AGC1-1, OXI1/AGC2-1 and PID. Post-translationally, phosphorylation on Thr-211 in the activation loop is required for full activity. PDK1 itself can autophosphorylate Thr-211, leading to its own activation. As to expression, ubiquitous.

The protein localises to the cytoplasm. It is found in the membrane. It carries out the reaction L-seryl-[protein] + ATP = O-phospho-L-seryl-[protein] + ADP + H(+). The catalysed reaction is L-threonyl-[protein] + ATP = O-phospho-L-threonyl-[protein] + ADP + H(+). Its activity is regulated as follows. Activated by phosphatidic acid (PA) and in response to the fungal elicitor xylanase. Functionally, may couple lipid signals to the activation-loop phosphorylation of several protein kinases of the so-called AGC kinase family. Interacts via its pleckstrin homology domain with phosphatidic acid, PtdIns3P and PtdIns(3,4)P2 and to a lesser extent with PtdIns(4,5)P2 and PtdIns4P. May play a general role in signaling processes controlling the pathogen/stress response, polar auxin transport and development. Transphosphorylates the AGC protein kinases OXI1/AGC2-1, PK1/S6K1, PK19/S6K2 and PID resulting in their activation. The polypeptide is 3-phosphoinositide-dependent protein kinase 1 (PDPK1) (Arabidopsis thaliana (Mouse-ear cress)).